We begin with the raw amino-acid sequence, 360 residues long: NAD(P)H-quinone oxidoreductase subunit 1, chloroplastic (360 aa).

Helical transmembrane passes span 30-50 (FLPIFSLVVGIVTGVLVLVWL), 98-118 (FSIGPSLAVISILLSYSVIPF), 127-147 (FNIGIFLWIAISSIAPIGLLM), 165-185 (AAQSISYEIPLTLCLLSISLL), 203-223 (FWGWNLWRQPIGFIIFLISSL), 253-273 (FGLFYVASYLNLLISSLFVTV), 297-317 (IFGTTIGIFITLAKTYLFLFI), and 340-360 (FLLPISLGNLLLTTSFQVFSL).

This sequence belongs to the complex I subunit 1 family. NDH is composed of at least 16 different subunits, 5 of which are encoded in the nucleus.

It is found in the plastid. The protein resides in the chloroplast thylakoid membrane. It catalyses the reaction a plastoquinone + NADH + (n+1) H(+)(in) = a plastoquinol + NAD(+) + n H(+)(out). The catalysed reaction is a plastoquinone + NADPH + (n+1) H(+)(in) = a plastoquinol + NADP(+) + n H(+)(out). In terms of biological role, NDH shuttles electrons from NAD(P)H:plastoquinone, via FMN and iron-sulfur (Fe-S) centers, to quinones in the photosynthetic chain and possibly in a chloroplast respiratory chain. The immediate electron acceptor for the enzyme in this species is believed to be plastoquinone. Couples the redox reaction to proton translocation, and thus conserves the redox energy in a proton gradient. This is NAD(P)H-quinone oxidoreductase subunit 1, chloroplastic from Aethionema cordifolium (Lebanon stonecress).